The chain runs to 378 residues: Erythronate-4-phosphate dehydrogenase (378 aa).

Positions 45 and 66 each coordinate substrate. NAD(+) contacts are provided by Asp146 and Thr175. Arg208 is a catalytic residue. Residue Asp232 coordinates NAD(+). Glu237 is a catalytic residue. His254 (proton donor) is an active-site residue. Gly257 lines the NAD(+) pocket. Tyr258 serves as a coordination point for substrate.

Belongs to the D-isomer specific 2-hydroxyacid dehydrogenase family. PdxB subfamily. In terms of assembly, homodimer.

The protein resides in the cytoplasm. The enzyme catalyses 4-phospho-D-erythronate + NAD(+) = (R)-3-hydroxy-2-oxo-4-phosphooxybutanoate + NADH + H(+). Its pathway is cofactor biosynthesis; pyridoxine 5'-phosphate biosynthesis; pyridoxine 5'-phosphate from D-erythrose 4-phosphate: step 2/5. Functionally, catalyzes the oxidation of erythronate-4-phosphate to 3-hydroxy-2-oxo-4-phosphonooxybutanoate. The protein is Erythronate-4-phosphate dehydrogenase of Escherichia coli O7:K1 (strain IAI39 / ExPEC).